The chain runs to 170 residues: Histone H1.9 (170 aa).

The H15 domain maps to R34–K108. The residue at position 56 (S56) is a Phosphoserine. The segment at A118 to P140 is disordered.

Belongs to the histone H1/H5 family. Expressed exclusively in the testis by haploid germ cells (at protein level).

The protein resides in the nucleus. It localises to the chromosome. Its function is as follows. DNA-binding protein that may be implicated in chromatin remodeling and/or transcriptional regulation during spermiogenesis, the process of spermatid maturation into spermatozoa. The chain is Histone H1.9 from Mus musculus (Mouse).